A 159-amino-acid chain; its full sequence is Large ribosomal subunit protein uL11 (159 aa).

Belongs to the universal ribosomal protein uL11 family. Part of the ribosomal stalk of the 50S ribosomal subunit. Interacts with L10 and the large rRNA to form the base of the stalk. L10 forms an elongated spine to which L12 dimers bind in a sequential fashion forming a multimeric L10(L12)X complex.

Functionally, forms part of the ribosomal stalk which helps the ribosome interact with GTP-bound translation factors. The polypeptide is Large ribosomal subunit protein uL11 (Methanothrix thermoacetophila (strain DSM 6194 / JCM 14653 / NBRC 101360 / PT) (Methanosaeta thermophila)).